The following is a 137-amino-acid chain: Competence protein ComGG (137 aa).

The helical transmembrane segment at 10-30 threads the bilayer; sequence GVLLYAVTIAAIFSLLLQFYL. Residues 106-137 form a disordered region; that stretch reads EKRDKKEEVATDSSEKVEKKKSEEKPEKKENS.

The transformation pili are flexible filaments, consisting mainly of the major pilin ComGC and smaller amounts of the minor pilins, including at least ComGD, ComGF and ComGG, and perhaps ComGE. Interacts with ComGC; the interaction is probably direct. Interacts with ComGD. Interacts with ComGE. Interacts with ComGF. May act as a link between ComGC, ComGD and ComGF.

The protein localises to the fimbrium. The protein resides in the cell membrane. Required for formation of the type IV-like pilus (T4P) that plays a role in transformation. Transformation pili are dynamically extended and retracted, perhaps thereby promoting DNA uptake and transformation. Required for transformation. This Streptococcus pneumoniae (strain ATCC BAA-255 / R6) protein is Competence protein ComGG.